Here is a 370-residue protein sequence, read N- to C-terminus: GTPase Obg (370 aa).

An Obg domain is found at 1–159 (MKFIDEARIE…RMLRLELKVL (159 aa)). The segment at 127 to 146 (NLHFKSSTNRAPRQKTDGKP) is disordered. Positions 160–334 (ADVGLLGMPN…LCYAIYDYLA (175 aa)) constitute an OBG-type G domain. Residues 166-173 (GMPNAGKS), 191-195 (FTTLA), 213-216 (DIPG), 284-287 (NKLD), and 315-317 (SAL) contribute to the GTP site. Mg(2+) is bound by residues Ser173 and Thr193.

The protein belongs to the TRAFAC class OBG-HflX-like GTPase superfamily. OBG GTPase family. Monomer. The cofactor is Mg(2+).

It is found in the cytoplasm. Its function is as follows. An essential GTPase which binds GTP, GDP and possibly (p)ppGpp with moderate affinity, with high nucleotide exchange rates and a fairly low GTP hydrolysis rate. Plays a role in control of the cell cycle, stress response, ribosome biogenesis and in those bacteria that undergo differentiation, in morphogenesis control. In Burkholderia lata (strain ATCC 17760 / DSM 23089 / LMG 22485 / NCIMB 9086 / R18194 / 383), this protein is GTPase Obg.